The sequence spans 376 residues: MPISRRVLTPITAAPVILAVLCFFFWSSIIGPDNLKGTKHVLQDAKTIPLPVDGPESLEFDPQGEGPYVGVTDGRILKWRGEELGWVDFAYTSPHRDNCSSHEVVPSCGRPLGLSFERKTGDLYICDGYFGVMKVGPEGGLAELVVDEAEGRKVMFANQGDIDEEEDIFYFNDSSDTYHFRDVFYVSLSGTKVGRVIRYDMKKKEAKVIMDKLRLPNGLALSKNGSFVVTCESSTNICHRIWVKGPKSGTNEVFATLPGSPDNIRRTPTGDFWVALHCKKNLFTRAVLIHTWVGRFFMNTMKMETVIHFMNGGKPHGIVVKLSGETGEILEILEDSEGKTVKYVSEAYETKDGKLWIGSVYWPAVWVLDTSVYDSI.

The first 31 residues, 1 to 31 (MPISRRVLTPITAAPVILAVLCFFFWSSIIG), serve as a signal peptide directing secretion. N-linked (GlcNAc...) asparagine glycans are attached at residues asparagine 98, asparagine 172, and asparagine 224.

The protein belongs to the strictosidine synthase family.

The protein resides in the vacuole. This is Protein STRICTOSIDINE SYNTHASE-LIKE 8 from Arabidopsis thaliana (Mouse-ear cress).